The chain runs to 461 residues: Arginine biosynthesis bifunctional protein ArgJ, chloroplastic (461 aa).

Positions 202, 228, 239, 326, 456, and 461 each coordinate substrate. Threonine 239 acts as the Nucleophile in catalysis.

Belongs to the ArgJ family. Heterodimer of an alpha and a beta chain.

It localises to the plastid. The protein resides in the chloroplast. The enzyme catalyses N(2)-acetyl-L-ornithine + L-glutamate = N-acetyl-L-glutamate + L-ornithine. It carries out the reaction L-glutamate + acetyl-CoA = N-acetyl-L-glutamate + CoA + H(+). It functions in the pathway amino-acid biosynthesis; L-arginine biosynthesis; L-ornithine and N-acetyl-L-glutamate from L-glutamate and N(2)-acetyl-L-ornithine (cyclic): step 1/1. It participates in amino-acid biosynthesis; L-arginine biosynthesis; N(2)-acetyl-L-ornithine from L-glutamate: step 1/4. Functionally, catalyzes two activities which are involved in the cyclic version of arginine biosynthesis: the synthesis of acetylglutamate from glutamate and acetyl-CoA, and of ornithine by transacetylation between acetylornithine and glutamate. The chain is Arginine biosynthesis bifunctional protein ArgJ, chloroplastic from Ostreococcus lucimarinus (strain CCE9901).